Consider the following 362-residue polypeptide: Cobalt-precorrin-5B C(1)-methyltransferase (362 aa).

This sequence belongs to the CbiD family.

It catalyses the reaction Co-precorrin-5B + S-adenosyl-L-methionine = Co-precorrin-6A + S-adenosyl-L-homocysteine. It functions in the pathway cofactor biosynthesis; adenosylcobalamin biosynthesis; cob(II)yrinate a,c-diamide from sirohydrochlorin (anaerobic route): step 6/10. Its function is as follows. Catalyzes the methylation of C-1 in cobalt-precorrin-5B to form cobalt-precorrin-6A. The protein is Cobalt-precorrin-5B C(1)-methyltransferase of Methanocaldococcus jannaschii (strain ATCC 43067 / DSM 2661 / JAL-1 / JCM 10045 / NBRC 100440) (Methanococcus jannaschii).